A 496-amino-acid chain; its full sequence is Cyclin-dependent kinase 16 (496 aa).

The interval Met-1–Val-97 is disordered. Ser-12 is modified (phosphoserine; by BRSK2). A phosphoserine mark is found at Ser-36, Ser-42, Ser-64, Ser-65, Ser-78, Ser-82, and Ser-89. Positions Ile-69 to Ser-78 are enriched in basic and acidic residues. Over residues Asp-83 to Val-93 the composition is skewed to polar residues. A Phosphoserine; by CDK5 modification is found at Ser-95. A phosphoserine mark is found at Ser-110, Ser-119, Ser-138, Ser-146, Ser-153, and Ser-155. In terms of domain architecture, Protein kinase spans Tyr-165–Phe-446. ATP-binding positions include Leu-171–Val-179 and Lys-194. Position 175 is a phosphothreonine (Thr-175). The Proton acceptor role is filled by Asp-286. The residue at position 380 (Thr-380) is a Phosphothreonine. 3 positions are modified to phosphoserine: Ser-391, Ser-478, and Ser-480.

Belongs to the protein kinase superfamily. CMGC Ser/Thr protein kinase family. CDC2/CDKX subfamily. Found in a complex containing CABLES1, CDK17 and TDRD7. Interacts with BRSK2. Identified in a complex with NSF, syntaxin-1, synaptotagmin, SYN1, SYP and CDK5R1. Interacts with YWHAH, YWHAQ and YWHAZ. Interacts with CCNY; this interaction increases the CDK16 kinase activity. Interacts with CCNYL1; this interaction mutually increases the stability of CDK16 and CCNYL1 and increases the kinase activity of CDK16. Interacts with NSF. Phosphorylation of CDK16 is essential for the binding of CCNY, but also essential for the regulation of CDK16 kinase activity. Phosphorylation of CDK16 is essential for the binding of CCNYl1, but also essential for the regulation of CDK16 kinase activity. Ser-146 and Ser-153 are the most critical sites for the binding of CCNYL1 and for modulating CDK16 kinase activity. Phosphorylation at Ser-153 inhibits kinase activity. Detected in pancreas islets (at protein level). Detected in brain and pancreas.

It localises to the cytoplasm. It is found in the cytoplasmic vesicle. Its subcellular location is the secretory vesicle. The protein resides in the cell membrane. The protein localises to the synapse. It localises to the synaptosome. The catalysed reaction is L-seryl-[protein] + ATP = O-phospho-L-seryl-[protein] + ADP + H(+). It catalyses the reaction L-threonyl-[protein] + ATP = O-phospho-L-threonyl-[protein] + ADP + H(+). In terms of biological role, protein kinase that plays a role in vesicle-mediated transport processes and exocytosis. Regulates GH1 release by brain neurons. Phosphorylates NSF, and thereby regulates NSF oligomerization. Required for normal spermatogenesis. Regulates neuron differentiation and dendrite development. Plays a role in the regulation of insulin secretion in response to changes in blood glucose levels. Can phosphorylate CCNY at 'Ser-336' (in vitro). The protein is Cyclin-dependent kinase 16 (CDK16) of Homo sapiens (Human).